A 195-amino-acid polypeptide reads, in one-letter code: Putative kinase protein 143R (195 aa).

ATP is bound at residue 8-16 (GIIGAGKST). 3 residues coordinate substrate: glutamate 31, tyrosine 43, and glutamine 54. Glutamate 78 acts as the Proton acceptor in catalysis. Substrate is bound by residues arginine 79 and glutamate 142.

This sequence belongs to the DCK/DGK family.

The chain is Putative kinase protein 143R from Acheta domesticus (House cricket).